Consider the following 388-residue polypeptide: Protein TsgA homolog (388 aa).

12 helical membrane passes run 12–32 (CISF…GIFL), 51–71 (TFLN…TNII), 77–97 (LIFG…SHNL), 102–122 (ISMF…TYII), 137–157 (LTDS…ALII), 163–183 (WYWV…ITIN), 203–223 (FSIL…LSFI), 246–266 (SAFW…LKFF), 272–292 (IITL…FYDY), 294–314 (LLYI…TIII), 331–351 (YILT…GPIV), and 356–376 (IFSA…LVII).

Belongs to the major facilitator superfamily. TsgA family.

The protein resides in the cell membrane. This Buchnera aphidicola subsp. Baizongia pistaciae (strain Bp) protein is Protein TsgA homolog.